Reading from the N-terminus, the 269-residue chain is GRF-interacting factor 10 (269 aa).

The segment at 1–71 (MTAEGEAKNP…GEKDDGACRD (71 aa)) is disordered. Residues 22 to 43 (QQAAPAPAPAQGEVAQEAAVQG) are compositionally biased toward low complexity. A compositionally biased stretch (basic and acidic residues) spans 47-69 (EQERDKADREVQGGAGEKDDGAC). One can recognise a QLQ domain in the interval 113–148 (AFTAMQLQELEQQSRVYQYMAARVPVPTHLVFPVWK). Residues 179 to 223 (EPEPGRCRRTDGKKWRCWRNTIPNEKYCERHMHRGRKRPVQVFLE) enclose the WRC domain. 2 consecutive short sequence motifs (bipartite nuclear localization signal) follow at residues 184 to 194 (RCRRTDGKKWR) and 212 to 216 (RGRKR). Residues 217–269 (PVQVFLEDDEPDSASGSKPAAPGKATEGAKKADDKSPSSKKLAVAAPAAVQST) form a disordered region. Residues 243-253 (EGAKKADDKSP) show a composition bias toward basic and acidic residues.

It belongs to the GRF family. Interacts with GIF1. Highly expressed in shoots. Expressed in developing leaves.

It is found in the nucleus. Involved in the regulation of cell proliferation in developing shoots and leaves. Does not possess transactivation activity. The protein is GRF-interacting factor 10 of Zea mays (Maize).